The following is a 415-amino-acid chain: Ribulose bisphosphate carboxylase large chain (415 aa).

Substrate contacts are provided by asparagine 101 and threonine 151. The Proton acceptor role is filled by lysine 153. Lysine 155 contributes to the substrate binding site. The Mg(2+) site is built by lysine 179, aspartate 181, and glutamate 182. The residue at position 179 (lysine 179) is an N6-carboxylysine. Histidine 272 functions as the Proton acceptor in the catalytic mechanism. 3 residues coordinate substrate: arginine 273, histidine 305, and serine 357.

Belongs to the RuBisCO large chain family. Type I subfamily. Heterohexadecamer of 8 large chains and 8 small chains; disulfide-linked. The disulfide link is formed within the large subunit homodimers. The cofactor is Mg(2+). In terms of processing, the disulfide bond which can form in the large chain dimeric partners within the hexadecamer appears to be associated with oxidative stress and protein turnover.

It is found in the plastid. The protein localises to the chloroplast. It carries out the reaction 2 (2R)-3-phosphoglycerate + 2 H(+) = D-ribulose 1,5-bisphosphate + CO2 + H2O. It catalyses the reaction D-ribulose 1,5-bisphosphate + O2 = 2-phosphoglycolate + (2R)-3-phosphoglycerate + 2 H(+). RuBisCO catalyzes two reactions: the carboxylation of D-ribulose 1,5-bisphosphate, the primary event in carbon dioxide fixation, as well as the oxidative fragmentation of the pentose substrate in the photorespiration process. Both reactions occur simultaneously and in competition at the same active site. This Cibotium barometz (Scythian lamb) protein is Ribulose bisphosphate carboxylase large chain.